The following is a 568-amino-acid chain: Phosphoprotein (568 aa).

A disordered region spans residues 1 to 25; sequence MDQDAFFSERDPEAEGETPRKQESL. A compositionally biased stretch (basic and acidic residues) spans 7 to 24; sequence FSERDPEAEGETPRKQES. Residues 33–41 form an N0 binding region; that stretch reads DVVLSYKPT. Residues 55 to 322 are disordered; it reads DNSKENKPSC…TTANEEGTSN (268 aa). 4 stretches are compositionally biased toward basic and acidic residues: residues 56 to 105, 132 to 144, 151 to 167, and 175 to 190; these read NSKE…HARI, RNTRIDEDSPNER, PTDEDRKMAENSNKREE, and EEVRRGTPLSDDREGR. A compositionally biased stretch (polar residues) spans 191–216; sequence TNNNGRSMETSSTHSTRITDVITNPS. The segment covering 239–265 has biased composition (basic and acidic residues); it reads TRSERTQNSELHKSTSEDSSNLEDHNT. The segment covering 294-304 has biased composition (low complexity); the sequence is YTTNNANNNTK. A multimerization region spans residues 344 to 411; that stretch reads FELSRSASHV…SSRDLHKRFS (68 aa). Residues 387–416 adopt a coiled-coil conformation; sequence EENRTLLKQIQEEIDSSRDLHKRFSEYQKE. Residues 412–445 form a l protein binding region; the sequence is EYQKEQNSLMMANLSTLHIITDRGGKTGDPSDTT. Disordered regions lie at residues 434–455 and 494–513; these read RGGKTGDPSDTTRSPSVFTKGK and VLEEHNNEPQASNASRLIPS. Residues 441–450 show a composition bias toward polar residues; the sequence is PSDTTRSPSV. Residues 479 to 568 form an interaction with the nucleocapsid (N-RNA) region; sequence DLIREDELRD…FEEDIDSLTN (90 aa).

Belongs to the respirovirus P protein family. Homotetramer. Interacts (via multimerization domain) with polymerase L; this interaction forms the polymerase complex. Interacts (via N-terminus) with N0; this interaction allows P to chaperon N0 before encapsidation and form the N-P complex. Interacts (via C-terminus) with N-RNA template; this interaction positions the polymerase on the template.

Functionally, essential cofactor of the RNA polymerase L that plays a central role in the transcription and replication by forming the polymerase complex with RNA polymerase L and recruiting L to the genomic N-RNA template for RNA synthesis. Also plays a central role in the encapsidation of nascent RNA chains by forming the encapsidation complex with the nucleocapsid protein N (N-P complex). Acts as a chaperone for newly synthesized free N protein, so-called N0, allowing encapsidation of nascent RNA chains during replication. The nucleoprotein protein N prevents excessive phosphorylation of P, which leads to down-regulation of viral transcription/ replication. Participates, together with N, in the formation of viral factories (viroplasms), which are large inclusions in the host cytoplasm where replication takes place. Recruits host PI4KB and remodel the host endoplasmic reticulum membrane to form viral replication factories. The protein is Phosphoprotein (P/C) of Human parainfluenza 1 virus (strain CI-5/73) (HPIV-1).